The chain runs to 271 residues: Elongation factor Ts (271 aa).

Positions 76–79 are involved in Mg(2+) ion dislocation from EF-Tu; sequence TDFV.

It belongs to the EF-Ts family.

It localises to the cytoplasm. Its function is as follows. Associates with the EF-Tu.GDP complex and induces the exchange of GDP to GTP. It remains bound to the aminoacyl-tRNA.EF-Tu.GTP complex up to the GTP hydrolysis stage on the ribosome. This chain is Elongation factor Ts, found in Mycolicibacterium vanbaalenii (strain DSM 7251 / JCM 13017 / BCRC 16820 / KCTC 9966 / NRRL B-24157 / PYR-1) (Mycobacterium vanbaalenii).